The sequence spans 280 residues: Ribosomal protein L11 methyltransferase (280 aa).

The S-adenosyl-L-methionine site is built by Thr131, Gly152, Asp174, and Asn217.

This sequence belongs to the methyltransferase superfamily. PrmA family.

It is found in the cytoplasm. The catalysed reaction is L-lysyl-[protein] + 3 S-adenosyl-L-methionine = N(6),N(6),N(6)-trimethyl-L-lysyl-[protein] + 3 S-adenosyl-L-homocysteine + 3 H(+). In terms of biological role, methylates ribosomal protein L11. The chain is Ribosomal protein L11 methyltransferase from Bacteroides thetaiotaomicron (strain ATCC 29148 / DSM 2079 / JCM 5827 / CCUG 10774 / NCTC 10582 / VPI-5482 / E50).